The sequence spans 149 residues: Nucleoside diphosphate kinase (149 aa).

The ATP site is built by lysine 9, phenylalanine 57, arginine 85, threonine 91, arginine 102, and asparagine 112. The active-site Pros-phosphohistidine intermediate is histidine 115.

Belongs to the NDK family. As to quaternary structure, homotetramer. The cofactor is Mg(2+).

Its subcellular location is the cytoplasm. The catalysed reaction is dZDP + ATP = dZTP + ADP. It carries out the reaction a 2'-deoxyribonucleoside 5'-diphosphate + ATP = a 2'-deoxyribonucleoside 5'-triphosphate + ADP. The enzyme catalyses a ribonucleoside 5'-diphosphate + ATP = a ribonucleoside 5'-triphosphate + ADP. Its pathway is purine metabolism. Functionally, major role in the synthesis of nucleoside triphosphates other than ATP. The ATP gamma phosphate is transferred to the NDP beta phosphate via a ping-pong mechanism, using a phosphorylated active-site intermediate. Its function is as follows. (Microbial infection) Catalyzes the phosphorylation of dZDP to dZTP, when the bacterium is infected by a phage that produces the substrate for the synthesis of dZTP (2- amino-2'-deoxyadenosine 5'-triphosphate), which is then used by the phage as a DNA polymerase substrate. The protein is Nucleoside diphosphate kinase of Synechococcus sp. (strain JA-3-3Ab) (Cyanobacteria bacterium Yellowstone A-Prime).